A 79-amino-acid chain; its full sequence is D-alanyl carrier protein (79 aa).

Positions 1–77 constitute a Carrier domain; that stretch reads MTVEEKIIDA…KIVEGVKELQ (77 aa). Serine 35 is subject to O-(pantetheine 4'-phosphoryl)serine.

Belongs to the DltC family. In terms of processing, 4'-phosphopantetheine is transferred from CoA to a specific serine of apo-DCP.

The protein localises to the cytoplasm. The protein operates within cell wall biogenesis; lipoteichoic acid biosynthesis. Carrier protein involved in the D-alanylation of lipoteichoic acid (LTA). The loading of thioester-linked D-alanine onto DltC is catalyzed by D-alanine--D-alanyl carrier protein ligase DltA. The DltC-carried D-alanyl group is further transferred to cell membrane phosphatidylglycerol (PG) by forming an ester bond, probably catalyzed by DltD. D-alanylation of LTA plays an important role in modulating the properties of the cell wall in Gram-positive bacteria, influencing the net charge of the cell wall. The sequence is that of D-alanyl carrier protein from Streptococcus uberis (strain ATCC BAA-854 / 0140J).